A 229-amino-acid polypeptide reads, in one-letter code: Protein fmp52-2, mitochondrial (229 aa).

The N-terminal 45 residues, 1–45 (MTTAAVFGSTGAVGGQILATLLASDAFSSVKTVSRRLPNAQSPKL), are a transit peptide targeting the mitochondrion.

The protein belongs to the FMP52 family.

The protein localises to the mitochondrion outer membrane. The chain is Protein fmp52-2, mitochondrial (fmp522) from Aspergillus oryzae (strain ATCC 42149 / RIB 40) (Yellow koji mold).